Reading from the N-terminus, the 268-residue chain is HTH-type transcriptional activator RhaS (268 aa).

The 98-residue stretch at 171-268 (RQMIRWLENN…YSIAPRELRI (98 aa)) folds into the HTH araC/xylS-type domain. DNA-binding regions (H-T-H motif) lie at residues 188-209 (EELAEKFALPIRTLHRYIKSQT) and 236-259 (IINIAYDCGFNDSSYFSTCFKNEY).

Binds DNA as a dimer.

Its subcellular location is the cytoplasm. Its function is as follows. Activates expression of the rhaBAD and rhaT operons. The protein is HTH-type transcriptional activator RhaS of Mannheimia succiniciproducens (strain KCTC 0769BP / MBEL55E).